We begin with the raw amino-acid sequence, 361 residues long: MNHIKLIDCPIDVTYAINLISDPSCGASSIFIGTTRDSFQGKKVVSLAYEAYENMALKEMDKICSDLRATWPDLKHILIYHRLGTVPENEASVVIAASAPHRSAALKAVTFAIDQLKSRVPIWKKELYEGNHDAEWKENSESIRPKKSLSSFNYSVCKVDESRVVSRNLVQIRANDCELKNRVECFFKRKRAEINSCNVIDFKQSNLSSNINSDTEVDVSCARTQSTISKQEQSNCHLKVRRATNRCGPQQMQFRPKYKHELSRLTTSRVSTNEVGESLQNSRLHSIETYMGLTSKNNENIINRIKNVENRILLLESTSPEYQHFFEQSCMDQPEKKIKTNKTYSAHELRVYIHRKNKECP.

Substrate contacts are provided by residues 101–102, lysine 117, and 124–126; these read HR and KKE.

It belongs to the MoaE family. MOCS2B subfamily. In terms of assembly, heterotetramer; composed of 2 small (Mocs2A) and 2 large (Mocs2B) subunits.

It is found in the cytoplasm. The catalysed reaction is 2 [molybdopterin-synthase sulfur-carrier protein]-C-terminal-Gly-aminoethanethioate + cyclic pyranopterin phosphate + H2O = molybdopterin + 2 [molybdopterin-synthase sulfur-carrier protein]-C-terminal Gly-Gly + 2 H(+). The protein operates within cofactor biosynthesis; molybdopterin biosynthesis. Its function is as follows. Catalytic subunit of the molybdopterin synthase complex, a complex that catalyzes the conversion of precursor Z into molybdopterin. Acts by mediating the incorporation of 2 sulfur atoms from thiocarboxylated Mocs2A into precursor Z to generate a dithiolene group. This Drosophila persimilis (Fruit fly) protein is Molybdopterin synthase catalytic subunit.